The chain runs to 439 residues: Na(+)/H(+) antiporter NhaA (439 aa).

11 helical membrane-spanning segments follow: residues 12–32 (SMNI…AIIA), 67–87 (MIEF…GLEI), 103–123 (ALPF…YMSI), 133–153 (GLAI…SLLG), 162–182 (IFLT…IALF), 186–206 (HVSY…YFIG), 214–234 (IFFL…GIHS), 314–334 (ILPL…GELV), 341–361 (VAAG…WLAI), 379–399 (GIAL…NLSF), and 412–432 (FGVL…LRIV).

It belongs to the NhaA Na(+)/H(+) (TC 2.A.33) antiporter family.

It is found in the cell inner membrane. It catalyses the reaction Na(+)(in) + 2 H(+)(out) = Na(+)(out) + 2 H(+)(in). In terms of biological role, na(+)/H(+) antiporter that extrudes sodium in exchange for external protons. The polypeptide is Na(+)/H(+) antiporter NhaA (Bacteroides thetaiotaomicron (strain ATCC 29148 / DSM 2079 / JCM 5827 / CCUG 10774 / NCTC 10582 / VPI-5482 / E50)).